A 319-amino-acid polypeptide reads, in one-letter code: GATA transcription factor 18 (319 aa).

The segment covering M1–D15 has biased composition (low complexity). Positions M1–L74 are disordered. The span at N32–P60 shows a compositional bias: acidic residues. One can recognise a Tify domain in the interval L74–S109. In terms of domain architecture, CCT spans R143 to R185. A GATA-type zinc finger spans residues C215–C242. The disordered stretch occupies residues I292–Q319.

The protein belongs to the type IV zinc-finger family. Class C subfamily.

The protein resides in the nucleus. In terms of biological role, transcriptional activator that specifically binds 5'-GATA-3' or 5'-GAT-3' motifs within gene promoters. The protein is GATA transcription factor 18 of Oryza sativa subsp. indica (Rice).